The sequence spans 202 residues: 3-isopropylmalate dehydratase small subunit (202 aa).

It belongs to the LeuD family. LeuD type 1 subfamily. As to quaternary structure, heterodimer of LeuC and LeuD.

The catalysed reaction is (2R,3S)-3-isopropylmalate = (2S)-2-isopropylmalate. It participates in amino-acid biosynthesis; L-leucine biosynthesis; L-leucine from 3-methyl-2-oxobutanoate: step 2/4. Catalyzes the isomerization between 2-isopropylmalate and 3-isopropylmalate, via the formation of 2-isopropylmaleate. This Rhizobium rhizogenes (strain K84 / ATCC BAA-868) (Agrobacterium radiobacter) protein is 3-isopropylmalate dehydratase small subunit.